The primary structure comprises 557 residues: ABC1 family protein MCP2 homolog (557 aa).

A mitochondrion-targeting transit peptide spans 1-33; the sequence is MFSRFSWPRITRCFRSYPKKKSSCISFTHHARE. Residues 34-39 lie on the Mitochondrial matrix side of the membrane; it reads HTNFKK. The chain crosses the membrane as a helical span at residues 40-56; sequence PAVVGASITLMASVALV. The Mitochondrial intermembrane portion of the chain corresponds to 57–557; the sequence is DFDPVKHAGV…NYFYYKHMYL (501 aa).

Belongs to the protein kinase superfamily. ADCK protein kinase family.

It is found in the mitochondrion inner membrane. Its function is as follows. Involved in mitochondrial lipid homeostasis. In Schizosaccharomyces pombe (strain 972 / ATCC 24843) (Fission yeast), this protein is ABC1 family protein MCP2 homolog.